The primary structure comprises 938 residues: Breast cancer type 2 susceptibility protein homolog (938 aa).

Composition is skewed to basic and acidic residues over residues 320 to 339 (LEPS…ESKI) and 409 to 425 (NSIK…ETPN). Disordered regions lie at residues 320-359 (LEPS…TTVL) and 409-434 (NSIK…SSHQ). 3 BRCA2 repeats span residues 537-571 (AEPE…EFQY), 638-672 (NEPQ…QSRA), and 713-747 (SETE…EFQA). A compositionally biased stretch (polar residues) spans 870 to 879 (SSTETSTSCA). Residues 870–938 (SSTETSTSCA…RRLGLSRSRY (69 aa)) are disordered. Over residues 898–915 (ADRDLNRSKDCAKNRQDA) the composition is skewed to basic and acidic residues. Residues 926 to 938 (KKSRRLGLSRSRY) show a composition bias toward basic residues.

In terms of assembly, interacts with Rad9 and spn-A/Rad51.

The protein localises to the nucleus. Its function is as follows. Involved in and required for double-strand break repair by meiotic and mitotic homologous recombination. During meiosis, has a dual role in the repair of meiotic double-stranded breaks and the efficient activation of the meiotic recombination checkpoint. The chain is Breast cancer type 2 susceptibility protein homolog from Drosophila sechellia (Fruit fly).